A 1013-amino-acid chain; its full sequence is Prominin-like protein (1013 aa).

A helical membrane pass occupies residues 32–52 (IAYLAICGLSVAIFGFALATL). N-linked (GlcNAc...) asparagine glycosylation is found at Asn99 and Asn116. 3 helical membrane passes run 215–235 (CGIC…IAFV), 489–509 (VVSL…IFAL), and 535–555 (LLLA…VGLF). Residues Asn576, Asn618, Asn803, and Asn824 are each glycosylated (N-linked (GlcNAc...) asparagine). The chain crosses the membrane as a helical span at residues 852-872 (INGFWVGILLCALLFLPILFV). The tract at residues 918-1013 (ANVPKKRRKA…YYYPGASEQD (96 aa)) is disordered. Asn949 carries N-linked (GlcNAc...) asparagine glycosylation. Positions 950–963 (RSGGDRGGGGGDGA) are enriched in gly residues.

The protein belongs to the prominin family.

It localises to the membrane. This chain is Prominin-like protein, found in Drosophila melanogaster (Fruit fly).